The chain runs to 406 residues: MQSMRFMILALLVQFLPAWAINDPAKSAAPYHDEFPLFRSANMASPDKLSTGIGFHSFRIPAVVRTTTGRILAFAEGRRHTNQDFGDINLVYKRTKTTANNGASPSDWEPLREVVGSGAGTWGNPTPVVDDDNTIYLFLSWNGATYSQNGKDVLPDGTVTKKIDSTWEGRRHLYLTESRDDGNTWSKPVDLTKELTPDGWAWDAVGPGNGIRLTTGELVIPAMGRNIIGRGAPGNRTWSVQRLSGAGAEGTIVQTPDGKLYRNDRPSQKGYRMVARGTLEGFGAFAPDAGLPDPACQGSVLRYNSDAPARTIFLNSASGTSRRAMRVRISYDADAKKFNYGRKLEDAKVSGAGHEGGYSSMTKTGDYKIGALVESDFFNDGTGKNSYRAIIWRRFNLSWILNGPNN.

An N-terminal signal peptide occupies residues Met1–Ala20. Substrate is bound by residues Arg59, Arg78, Asp84, and Gln148. N-linked (GlcNAc...) asparagine glycosylation occurs at Asn235. Residues Arg265, Arg322, Arg322–Arg323, Tyr331–Asp332, Lys337, Tyr358, Asp376, and Asp376–Phe378 contribute to the substrate site. Asn396 carries N-linked (GlcNAc...) asparagine glycosylation.

It belongs to the glycosyl hydrolase 33 family.

The catalysed reaction is Hydrolysis of alpha-(2-&gt;3)-, alpha-(2-&gt;6)-, alpha-(2-&gt;8)- glycosidic linkages of terminal sialic acid residues in oligosaccharides, glycoproteins, glycolipids, colominic acid and synthetic substrates.. Sialidase is able to release sialic acid from a wide variety of natural substrates including bovine salivary mucin, colominic acid, bovine fetuin, a serum glycoprotein containing both alpha-2-6 and alpha-2-3-linkages in a ratio of about 3:2, and glycoproteins and glycolipids from thermally denatured human lung epithelial cells. Does not show any trans-sialidase activity since it is able to remove terminal sialic acid residues but is unable to catalyze their transfer to the acceptor substrate. 2-keto-3-deoxynononic acid (KDN) is the preferred substrate and A.fumigatus can utilize KDN as a sole carbon source. The protein is Exo-alpha-sialidase of Aspergillus fumigatus (strain ATCC MYA-4609 / CBS 101355 / FGSC A1100 / Af293) (Neosartorya fumigata).